Reading from the N-terminus, the 62-residue chain is Large ribosomal subunit protein bL32 (62 aa).

Residues 1 to 16 (MAVPKRKTSPSRRGMR) are compositionally biased toward basic residues. Positions 1-44 (MAVPKRKTSPSRRGMRRSADALKAPTYVEDKDSGELRRPHHIDL) are disordered. Residues 28-44 (VEDKDSGELRRPHHIDL) are compositionally biased toward basic and acidic residues.

The protein belongs to the bacterial ribosomal protein bL32 family.

The chain is Large ribosomal subunit protein bL32 from Methylorubrum extorquens (strain CM4 / NCIMB 13688) (Methylobacterium extorquens).